The primary structure comprises 389 residues: Transmembrane protease serine 11A (389 aa).

The Cytoplasmic portion of the chain corresponds to 1–23; sequence MEVAGYGTHNRDLKQWMVTLLSA. The helical; Signal-anchor for type II membrane protein transmembrane segment at 24–44 threads the bilayer; the sequence is LSLMMVVVTIGLLALFLVFDI. An SEA domain is found at 31 to 148; the sequence is VTIGLLALFL…SLVQVKDCGK (118 aa). The Extracellular portion of the chain corresponds to 45 to 389; it reads QVNSNSGQKS…RHWIASKTGL (345 aa). In terms of domain architecture, Peptidase S1 spans 158 to 388; the sequence is IVSGNPAAKG…YRHWIASKTG (231 aa). A disulfide bridge links Cys183 with Cys199. Residues His198 and Asp243 each act as charge relay system in the active site. N-linked (GlcNAc...) asparagine glycosylation is present at Asn274. 2 cysteine pairs are disulfide-bonded: Cys308–Cys324 and Cys335–Cys364. Ser339 functions as the Charge relay system in the catalytic mechanism.

This sequence belongs to the peptidase S1 family.

Its subcellular location is the membrane. Functionally, probable serine protease which may play a role in cellular senescence. Overexpression inhibits cell growth and induce G1 cell cycle arrest. The protein is Transmembrane protease serine 11A (Tmprss11a) of Mus musculus (Mouse).